A 368-amino-acid polypeptide reads, in one-letter code: Proton-coupled zinc antiporter SLC30A8 (368 aa).

Over 1-78 (MEFLERTYLV…AKWRLCAASA (78 aa)) the chain is Cytoplasmic. Residues His-51, Cys-52, and His-53 each coordinate Zn(2+). Positions 51 to 53 (HCH) match the HCH Motif; seals regulatory zinc-binding pocket motif. Residues 79 to 99 (ICFFFMVAEVVGGHVAGSLAV) traverse the membrane as a helical segment. Over 100–102 (LTD) the chain is Lumenal, vesicle. The helical transmembrane segment at 103-123 (AAHLLIDLTSFLLSLFSLWLS) threads the bilayer. Residues His-105 and Asp-109 each contribute to the Zn(2+) site. Over 124–139 (SRPPSKRLTFGWYRAE) the chain is Cytoplasmic. Residues 140–160 (ILGALLSVLCIWVVTGVLVYL) form a helical membrane-spanning segment. Residues 161–174 (ACERLLYPDYQIQA) lie on the Lumenal, vesicle side of the membrane. The chain crosses the membrane as a helical span at residues 175-195 (GIMITVSGCAVAANIVLTLIL). At 196 to 216 (HQRHLGHNHKDAQANASVRAA) the chain is on the cytoplasmic side. A helical membrane pass occupies residues 217–237 (FVHALGDVFQSTSVLISALII). 2 residues coordinate Zn(2+): His-219 and Asp-223. Residues 238–245 (YFKPDYKM) are Lumenal, vesicle-facing. Residues 246 to 266 (ADPVCTFISSVLALASTVMIL) form a helical membrane-spanning segment. Residues 267 to 368 (KDFSILLMEG…SCLLCEDPQD (102 aa)) lie on the Cytoplasmic side of the membrane. Zn(2+) contacts are provided by His-300, His-317, His-344, Glu-351, Cys-360, and Cys-363.

It belongs to the cation diffusion facilitator (CDF) transporter (TC 2.A.4) family. SLC30A subfamily. In terms of assembly, homodimer. Expressed in endocrine pancreatic islet alpha and beta cells. May be more abundant in beta cells than in alpha cells. Expressed in cubical epithelium lining thyroid follicles (at protein level). In the adrenal gland, detected in the cortex, but not in the medulla (at protein level).

The protein localises to the cytoplasmic vesicle. It localises to the secretory vesicle membrane. It is found in the cell membrane. It catalyses the reaction Zn(2+)(in) + 2 H(+)(out) = Zn(2+)(out) + 2 H(+)(in). Its function is as follows. Proton-coupled zinc ion antiporter mediating the entry of zinc into the lumen of pancreatic beta cell secretory granules, thereby regulating insulin secretion. The polypeptide is Proton-coupled zinc antiporter SLC30A8 (Rattus norvegicus (Rat)).